A 276-amino-acid chain; its full sequence is Shikimate dehydrogenase (NADP(+)) (276 aa).

Residues 15-17 (SLS) and T62 contribute to the shikimate site. K66 functions as the Proton acceptor in the catalytic mechanism. NADP(+) is bound at residue E78. Residues N87 and D102 each coordinate shikimate. Residues 151–156 (NRTVEK) and I218 each bind NADP(+). A shikimate-binding site is contributed by Y220. G241 is a binding site for NADP(+).

This sequence belongs to the shikimate dehydrogenase family. In terms of assembly, homodimer.

It carries out the reaction shikimate + NADP(+) = 3-dehydroshikimate + NADPH + H(+). Its pathway is metabolic intermediate biosynthesis; chorismate biosynthesis; chorismate from D-erythrose 4-phosphate and phosphoenolpyruvate: step 4/7. Functionally, involved in the biosynthesis of the chorismate, which leads to the biosynthesis of aromatic amino acids. Catalyzes the reversible NADPH linked reduction of 3-dehydroshikimate (DHSA) to yield shikimate (SA). This is Shikimate dehydrogenase (NADP(+)) from Geobacillus kaustophilus (strain HTA426).